Reading from the N-terminus, the 89-residue chain is DNA/RNA-binding protein Alba 1 (89 aa).

Belongs to the histone-like Alba family.

The protein resides in the cytoplasm. It localises to the chromosome. Binds double-stranded DNA tightly but without sequence specificity. Involved in DNA compaction. The chain is DNA/RNA-binding protein Alba 1 from Archaeoglobus fulgidus (strain ATCC 49558 / DSM 4304 / JCM 9628 / NBRC 100126 / VC-16).